The primary structure comprises 72 residues: UPF0495 protein KLLA0D04334g (72 aa).

Residues 20–42 (PVELTPLFLAMGVALASGTWFSY) form a helical membrane-spanning segment.

The protein belongs to the UPF0495 family.

Its subcellular location is the membrane. This Kluyveromyces lactis (strain ATCC 8585 / CBS 2359 / DSM 70799 / NBRC 1267 / NRRL Y-1140 / WM37) (Yeast) protein is UPF0495 protein KLLA0D04334g.